The chain runs to 517 residues: Ribose import ATP-binding protein RbsA 1 (517 aa).

2 ABC transporter domains span residues 11–251 (LEMR…VGRD) and 263–507 (YDPG…ALAT). Position 43–50 (43–50 (GENGAGKS)) interacts with ATP.

The protein belongs to the ABC transporter superfamily. Ribose importer (TC 3.A.1.2.1) family. In terms of assembly, the complex is composed of an ATP-binding protein (RbsA), two transmembrane proteins (RbsC) and a solute-binding protein (RbsB).

It is found in the cell inner membrane. The enzyme catalyses D-ribose(out) + ATP + H2O = D-ribose(in) + ADP + phosphate + H(+). In terms of biological role, part of the ABC transporter complex RbsABC involved in ribose import. Responsible for energy coupling to the transport system. In Burkholderia ambifaria (strain ATCC BAA-244 / DSM 16087 / CCUG 44356 / LMG 19182 / AMMD) (Burkholderia cepacia (strain AMMD)), this protein is Ribose import ATP-binding protein RbsA 1.